The following is a 491-amino-acid chain: Sodium-dependent glucose transporter 1 (491 aa).

A run of 11 helical transmembrane segments spans residues Phe26–Phe46, His52–Cys72, Val81–Leu101, Phe119–Leu139, Leu165–Phe185, Ala210–Gly230, Leu255–Tyr275, Gly277–Phe297, Leu303–Phe323, Ser338–Leu358, and Phe365–Val385. Disordered regions lie at residues Ala397–Gln425 and Asn438–Asp491. The segment covering Met416 to Gln425 has biased composition (acidic residues). The segment covering Gln440–Pro458 has biased composition (polar residues).

This sequence belongs to the major facilitator superfamily.

The protein resides in the apical cell membrane. Its function is as follows. May function as a sodium-dependent glucose transporter. Potential channels for urea in the inner medulla of kidney. The chain is Sodium-dependent glucose transporter 1 (mfsd4b) from Xenopus laevis (African clawed frog).